A 275-amino-acid polypeptide reads, in one-letter code: Putative phosphoenolpyruvate synthase regulatory protein (275 aa).

157–164 (GVSRCGKT) provides a ligand contact to ADP.

Belongs to the pyruvate, phosphate/water dikinase regulatory protein family. PSRP subfamily.

The enzyme catalyses [pyruvate, water dikinase] + ADP = [pyruvate, water dikinase]-phosphate + AMP + H(+). The catalysed reaction is [pyruvate, water dikinase]-phosphate + phosphate + H(+) = [pyruvate, water dikinase] + diphosphate. In terms of biological role, bifunctional serine/threonine kinase and phosphorylase involved in the regulation of the phosphoenolpyruvate synthase (PEPS) by catalyzing its phosphorylation/dephosphorylation. The sequence is that of Putative phosphoenolpyruvate synthase regulatory protein from Bordetella bronchiseptica (strain ATCC BAA-588 / NCTC 13252 / RB50) (Alcaligenes bronchisepticus).